Here is a 1529-residue protein sequence, read N- to C-terminus: ABC multidrug transporter AFR2 (1529 aa).

One can recognise an ABC transporter 1 domain in the interval G144–S394. N-linked (GlcNAc...) asparagine glycosylation is found at N235 and N318. Helical transmembrane passes span L510–T530, A539–L559, I589–L609, G614–F634, and L648–V668. A glycan (N-linked (GlcNAc...) asparagine) is linked at N742. The helical transmembrane segment at G757 to I777 threads the bilayer. The 243-residue stretch at F845–G1087 folds into the ABC transporter 2 domain. G881–T888 lines the ATP pocket. The next 5 helical transmembrane spans lie at Y1193–F1213, V1229–T1249, I1268–I1288, L1314–V1334, and M1353–F1373. N1434 carries N-linked (GlcNAc...) asparagine glycosylation. A helical membrane pass occupies residues F1465–L1485. The span at G1493–E1505 shows a compositional bias: basic and acidic residues. The disordered stretch occupies residues G1493–A1529. Positions Q1518–A1529 are enriched in polar residues.

This sequence belongs to the ABC transporter superfamily. ABCG family. PDR (TC 3.A.1.205) subfamily.

The protein resides in the cell membrane. It carries out the reaction itraconazole(in) + ATP + H2O = itraconazole(out) + ADP + phosphate + H(+). The catalysed reaction is voriconazole(in) + ATP + H2O = voriconazole(out) + ADP + phosphate + H(+). The enzyme catalyses fluconazole(in) + ATP + H2O = fluconazole(out) + ADP + phosphate + H(+). Its function is as follows. Pleiotropic ABC efflux transporter that confers resistance to structurally and functionally unrelated compounds including azoles such as fluconazole (FLC), itraconazole (ITC), posaconazole (POS), and voriconazole (VRC). The polypeptide is ABC multidrug transporter AFR2 (Cryptococcus deuterogattii (strain R265) (Cryptococcus gattii VGII (strain R265))).